The chain runs to 91 residues: MSVKIRLKRMGSKKRPFYRIVVADSRSPRDGRFIETVGTYNPLTDPETVTLKEEKVMNWLNNGAQPSDTVRNILSRNGVMKKFHEAKFSKK.

It belongs to the bacterial ribosomal protein bS16 family.

In Ligilactobacillus salivarius (strain UCC118) (Lactobacillus salivarius), this protein is Small ribosomal subunit protein bS16.